The primary structure comprises 243 residues: MTVAADALSAPLRAGAEALGLDLSEAHLGQLLEFLALLQKWNQVYNLTAVRDPQEMLTHHLLDSLAAVAPLQRHLRGMQDLPGSAGDGAKLRLLDVGSGGGLPGVVFAICCPALDVSCVDTVAKKAAFIQQAAVSLRLRNLRGIHARVENLAGPFDVVSCRAFASLPDFVAWSQAAIAANGVWLAMKGRDPSDEITGLPPIAEVFHVEQLAVPGLDAERCIVWMRPRKGAEAGADGVGGPALP.

S-adenosyl-L-methionine contacts are provided by residues Gly97, Leu102, 148 to 149, and Arg161; that span reads VE.

This sequence belongs to the methyltransferase superfamily. RNA methyltransferase RsmG family.

Its subcellular location is the cytoplasm. The catalysed reaction is guanosine(527) in 16S rRNA + S-adenosyl-L-methionine = N(7)-methylguanosine(527) in 16S rRNA + S-adenosyl-L-homocysteine. In terms of biological role, specifically methylates the N7 position of guanine in position 527 of 16S rRNA. This chain is Ribosomal RNA small subunit methyltransferase G, found in Paracidovorax citrulli (strain AAC00-1) (Acidovorax citrulli).